We begin with the raw amino-acid sequence, 451 residues long: Target of rapamycin complex 1 subunit tco89 (451 aa).

The segment at 1-35 (MERPSLSRRTSSSTVSTDGEGVYSRSTKERKRNFI) is disordered. Positions 7 to 17 (SRRTSSSTVST) are enriched in low complexity. Position 70 is a phosphoserine (Ser-70). Disordered regions lie at residues 122-164 (WDDA…PVTR), 176-264 (INSN…GNSL), and 362-437 (NQNF…DTDY). Residues 129-162 (NDSTAGNLDSDSALPTPSVTTNEAADSSRASSPV) are compositionally biased toward polar residues. The span at 203 to 215 (DDSAADASTTKSS) shows a compositional bias: low complexity. 3 stretches are compositionally biased toward polar residues: residues 228 to 242 (HSNN…NQPK), 362 to 376 (NQNF…TSAA), and 407 to 417 (QSASLNASMSA). Residues 419–430 (SHARQRSIHVPK) show a composition bias toward basic residues.

The protein belongs to the TORC subunit TCO89 family. In terms of assembly, the target of rapamycin complex 1 (TORC1) is composed of at least mip1, pop3/wat1, tco89, toc1 and tor2. Either Thr-10, Ser-11, Ser-12, Ser-13 or Thr-14 and Ser-214 or Ser-215 and Ser-247 or Ser-249 are phosphorylated as well.

The protein resides in the cytoplasm. Functionally, component of TORC1, which regulates multiple cellular processes to control cell growth in response to environmental signals. Tor2 is essential for growth. Nutrient limitation and environmental stress signals cause inactivation of TORC1. Active TORC1 positively controls cell growth and ribosome biogenesis by regulating ribosomal protein gene expression. TORC1 negatively controls G1 cell-cycle arrest, sexual development and amino acid uptake. Represses mating, meiosis and sporulation efficiency by interfering with the functions of the transcription factor ste11 and the meiosis-promoting RNA-binding protein mei2. In Schizosaccharomyces pombe (strain 972 / ATCC 24843) (Fission yeast), this protein is Target of rapamycin complex 1 subunit tco89.